Reading from the N-terminus, the 119-residue chain is Large ribosomal subunit protein uL18 (119 aa).

Belongs to the universal ribosomal protein uL18 family. Part of the 50S ribosomal subunit; part of the 5S rRNA/L5/L18/L25 subcomplex. Contacts the 5S and 23S rRNAs.

This is one of the proteins that bind and probably mediate the attachment of the 5S RNA into the large ribosomal subunit, where it forms part of the central protuberance. The chain is Large ribosomal subunit protein uL18 from Clostridium beijerinckii (strain ATCC 51743 / NCIMB 8052) (Clostridium acetobutylicum).